The following is a 269-amino-acid chain: Tryptophan synthase alpha chain (269 aa).

Active-site proton acceptor residues include glutamate 54 and aspartate 65.

The protein belongs to the TrpA family. As to quaternary structure, tetramer of two alpha and two beta chains.

The catalysed reaction is (1S,2R)-1-C-(indol-3-yl)glycerol 3-phosphate + L-serine = D-glyceraldehyde 3-phosphate + L-tryptophan + H2O. The protein operates within amino-acid biosynthesis; L-tryptophan biosynthesis; L-tryptophan from chorismate: step 5/5. Functionally, the alpha subunit is responsible for the aldol cleavage of indoleglycerol phosphate to indole and glyceraldehyde 3-phosphate. The polypeptide is Tryptophan synthase alpha chain (Synechococcus sp. (strain CC9902)).